The primary structure comprises 680 residues: Pescadillo homolog (680 aa).

Residues 310-330 (LDQAKDEQTAETTEESSDTID) form a disordered region. Residues 351–470 (QAGSLFAPFT…KLVRPDLYSP (120 aa)) form the BRCT domain. The interval 472-680 (ATLPPHLSPW…RRKLEKGAAK (209 aa)) is disordered. Positions 496-523 (AEQEEEGEAEMAEDSDEEMEEAADEKSK) form a coiled coil. Residues 497-518 (EQEEEGEAEMAEDSDEEMEEAA) are compositionally biased toward acidic residues. The segment covering 519-529 (DEKSKTASKDE) has biased composition (basic and acidic residues). Composition is skewed to acidic residues over residues 530 to 543 (AESESEEDDDDESV) and 551 to 585 (GTDDDESESESEEEDEDFGGFEDDEAASESEDEEE). The segment covering 586-596 (VARTQHQKELE) has biased composition (basic and acidic residues). Residues 613-680 (ASKKKASQAK…RRKLEKGAAK (68 aa)) adopt a coiled-coil conformation. Positions 616 to 628 (KKASQAKKIAAKK) are enriched in basic residues. A compositionally biased stretch (basic and acidic residues) spans 629 to 639 (RKEEEEIERQK).

This sequence belongs to the pescadillo family. As to quaternary structure, component of the NOP7 complex, composed of erb1, nop7 and ytm1. The complex is held together by erb1, which interacts with nop7 via its N-terminal domain and with ytm1 via a high-affinity interaction between the seven-bladed beta-propeller domains of the 2 proteins. The NOP7 complex associates with the 66S pre-ribosome.

Its subcellular location is the nucleus. The protein resides in the nucleolus. It is found in the nucleoplasm. Its function is as follows. Component of the NOP7 complex, which is required for maturation of the 25S and 5.8S ribosomal RNAs and formation of the 60S ribosome. This chain is Pescadillo homolog (nop7), found in Aspergillus clavatus (strain ATCC 1007 / CBS 513.65 / DSM 816 / NCTC 3887 / NRRL 1 / QM 1276 / 107).